We begin with the raw amino-acid sequence, 331 residues long: MEANREKYAADILSIKEAHDRIKPYIHRTPVLTSESLNSISGRSLFFKCECLQKGGAFKFRGACNAVLSLDAEQAAKGVVTHSSGNHAAALSLAAKIQGIPAYIVVPKGAPKCKVDNVIRYGGKVIWSEATMSSREEIASKVLQETGSVLIHPYNDGRIISGQGTIALELLEQIQEIDAIVVPISGGGLISGVALAAKSIKPSIRIIAAEPKGADDAAQSKVAGKIITLPVTNTIADGLRASLGDLTWPVVRDLVDDVVTLEECEIIEAMKMCYEILKVSVEPSGAIGLAAVLSNSFRNNPSCRDCKNIGIVLSGGNVDLGSLWDSFKSSK.

ATP-binding residues include Ser34 and Lys54. Lys59 functions as the Proton acceptor in the catalytic mechanism. Position 59 is an N6-(pyridoxal phosphate)lysine (Lys59). Thr81 is a Ca(2+) binding site. Residue Ser84 is the Proton acceptor of the active site. Position 86 (Asn86) interacts with pyridoxal 5'-phosphate. Residue Tyr121 participates in ATP binding. Asp178 lines the Mg(2+) pocket. Pyridoxal 5'-phosphate contacts are provided by Gly186, Gly187, and Gly188. Ca(2+)-binding residues include Glu210, Ala214, and Asp216. Positions 210, 214, and 216 each coordinate Mg(2+). The Mn(2+) site is built by Glu210, Ala214, and Asp216. Lys278 provides a ligand contact to ATP. A pyridoxal 5'-phosphate-binding site is contributed by Ser314. Asn317 contributes to the ATP binding site.

The protein belongs to the serine/threonine dehydratase family. As to quaternary structure, homodimer. Mg(2+) serves as cofactor. Requires Mn(2+) as cofactor. Ca(2+) is required as a cofactor. The cofactor is pyridoxal 5'-phosphate. As to expression, expressed in the whole plant.

It carries out the reaction L-serine = D-serine. The catalysed reaction is L-serine = pyruvate + NH4(+). The enzyme catalyses D-serine = pyruvate + NH4(+). Inhibited by hydroxylamine. Racemase activity is enhanced by Ca(2+), Mg(2+), Mn(2+), and is decreased by Ni(2+), Zn(2+). Hydratase activity is enhanced by Ca(2+), Mg(2+), Mn(2+), Cu(2+), Fe(2+), Ni(2+). Its function is as follows. Catalyzes the synthesis of D-serine from L-serine. Has dehydratase activity towards both L-serine and D-serine. Displays high substrate specificity for L-serine, whereas L-alanine, L-arginine, and L-glutamine were poor substrates. The chain is Serine racemase (SR) from Arabidopsis thaliana (Mouse-ear cress).